A 459-amino-acid polypeptide reads, in one-letter code: Argininosuccinate lyase (459 aa).

This sequence belongs to the lyase 1 family. Argininosuccinate lyase subfamily.

It is found in the cytoplasm. It carries out the reaction 2-(N(omega)-L-arginino)succinate = fumarate + L-arginine. It participates in amino-acid biosynthesis; L-arginine biosynthesis; L-arginine from L-ornithine and carbamoyl phosphate: step 3/3. The chain is Argininosuccinate lyase from Ruminiclostridium cellulolyticum (strain ATCC 35319 / DSM 5812 / JCM 6584 / H10) (Clostridium cellulolyticum).